Here is a 339-residue protein sequence, read N- to C-terminus: Phenylalanine--tRNA ligase alpha subunit (339 aa).

A Mg(2+)-binding site is contributed by glutamate 254.

Belongs to the class-II aminoacyl-tRNA synthetase family. Phe-tRNA synthetase alpha subunit type 1 subfamily. As to quaternary structure, tetramer of two alpha and two beta subunits. Requires Mg(2+) as cofactor.

It is found in the cytoplasm. It catalyses the reaction tRNA(Phe) + L-phenylalanine + ATP = L-phenylalanyl-tRNA(Phe) + AMP + diphosphate + H(+). In Clostridium novyi (strain NT), this protein is Phenylalanine--tRNA ligase alpha subunit.